The chain runs to 410 residues: Cytohesin-2 (410 aa).

Residues 13 to 56 (PEERMELENIRRRKQELLVEIQRLREELSEAMSEVEGLEANEGS) are a coiled coil. In terms of domain architecture, SEC7 spans 54–241 (EGSKTLQRNR…RNLYDSIRNE (188 aa)). The PH domain maps to 259–386 (NPDREGWLLK…WIKSIQAAVS (128 aa)). Residues 268–271 (KLGA), R290, Y301, R311, K349, N360, and H361 contribute to the a 1,2-diacyl-sn-glycero-3-phospho-(1D-myo-inositol-3,4,5-trisphosphate) site. The C-terminal autoinhibitory region stretch occupies residues 397–405 (RKKRISVKK).

As to quaternary structure, heteromer. Composed of TAMALIN, CYTH2 and at least one GRM1. Interacts with ARRB1. Interacts with ARL4D; the interaction is direct. Directly interacts with CCDC120 through the coiled coil domain; this interaction stabilizes CCDC120, possibly by preventing its ubiquitination, and is required for neurite growth in neuroblastoma cells. Interacts (via N-terminal domain) with INAVA (via N-terminal domain).

The protein resides in the cell membrane. The protein localises to the cytoplasm. It is found in the cell projection. It localises to the growth cone. In terms of biological role, acts as a guanine-nucleotide exchange factor (GEF). Promotes guanine-nucleotide exchange on ARF1, ARF3 and ARF6. Promotes the activation of ARF factors through replacement of GDP with GTP. The cell membrane form, in association with ARL4 proteins, recruits ARF6 to the plasma membrane. Involved in neurite growth. In Bos taurus (Bovine), this protein is Cytohesin-2 (CYTH2).